The following is a 296-amino-acid chain: Pantothenate synthetase (296 aa).

30–37 (MGNLHEGH) lines the ATP pocket. The active-site Proton donor is His-37. Gln-61 provides a ligand contact to (R)-pantoate. Residue Gln-61 coordinates beta-alanine. 149 to 152 (GEKD) serves as a coordination point for ATP. Gln-155 is a binding site for (R)-pantoate. ATP-binding positions include Val-178 and 186-189 (MSSR).

Belongs to the pantothenate synthetase family. In terms of assembly, homodimer.

It localises to the cytoplasm. It catalyses the reaction (R)-pantoate + beta-alanine + ATP = (R)-pantothenate + AMP + diphosphate + H(+). It functions in the pathway cofactor biosynthesis; (R)-pantothenate biosynthesis; (R)-pantothenate from (R)-pantoate and beta-alanine: step 1/1. Catalyzes the condensation of pantoate with beta-alanine in an ATP-dependent reaction via a pantoyl-adenylate intermediate. The protein is Pantothenate synthetase of Vibrio atlanticus (strain LGP32) (Vibrio splendidus (strain Mel32)).